Consider the following 333-residue polypeptide: D-lactate dehydrogenase (333 aa).

Residues 156-157 (HI), aspartate 176, 207-208 (VP), asparagine 213, 234-236 (VSR), and aspartate 260 each bind NAD(+). Arginine 236 is an active-site residue. Glutamate 265 is a catalytic residue. Histidine 297 (proton donor) is an active-site residue.

This sequence belongs to the D-isomer specific 2-hydroxyacid dehydrogenase family. Homodimer.

It carries out the reaction (R)-lactate + NAD(+) = pyruvate + NADH + H(+). The sequence is that of D-lactate dehydrogenase (ldhA) from Lactobacillus delbrueckii subsp. bulgaricus (strain ATCC 11842 / DSM 20081 / BCRC 10696 / JCM 1002 / NBRC 13953 / NCIMB 11778 / NCTC 12712 / WDCM 00102 / Lb 14).